The chain runs to 241 residues: uncharacterized protein (241 aa).

The protein belongs to the AB hydrolase superfamily. AB hydrolase 2 family.

This is an uncharacterized protein from Schizosaccharomyces pombe (strain 972 / ATCC 24843) (Fission yeast).